Reading from the N-terminus, the 193-residue chain is NADH-ubiquinone oxidoreductase chain 2 (193 aa).

5 consecutive transmembrane segments (helical) span residues 18–38, 39–59, 83–103, 116–138, and 161–181; these read FYST…KLGA, IFFL…FFLF, FFVL…GFFL, NLAF…LSTV, and LSFL…FFFL.

It is found in the mitochondrion inner membrane. The catalysed reaction is a ubiquinone + NADH + 5 H(+)(in) = a ubiquinol + NAD(+) + 4 H(+)(out). In terms of biological role, core subunit of the mitochondrial membrane respiratory chain NADH dehydrogenase (Complex I) that is believed to belong to the minimal assembly required for catalysis. Complex I functions in the transfer of electrons from NADH to the respiratory chain. The immediate electron acceptor for the enzyme is believed to be ubiquinone. This is NADH-ubiquinone oxidoreductase chain 2 (ND2) from Paramecium tetraurelia.